Here is a 334-residue protein sequence, read N- to C-terminus: Aspartate carbamoyltransferase catalytic subunit (334 aa).

Residues Arg71 and Thr72 each coordinate carbamoyl phosphate. Lys99 serves as a coordination point for L-aspartate. Carbamoyl phosphate-binding residues include Arg121, His151, and Gln154. 2 residues coordinate L-aspartate: Arg184 and Arg239. Positions 280 and 281 each coordinate carbamoyl phosphate.

This sequence belongs to the aspartate/ornithine carbamoyltransferase superfamily. ATCase family. In terms of assembly, heterododecamer (2C3:3R2) of six catalytic PyrB chains organized as two trimers (C3), and six regulatory PyrI chains organized as three dimers (R2).

It catalyses the reaction carbamoyl phosphate + L-aspartate = N-carbamoyl-L-aspartate + phosphate + H(+). It participates in pyrimidine metabolism; UMP biosynthesis via de novo pathway; (S)-dihydroorotate from bicarbonate: step 2/3. Its function is as follows. Catalyzes the condensation of carbamoyl phosphate and aspartate to form carbamoyl aspartate and inorganic phosphate, the committed step in the de novo pyrimidine nucleotide biosynthesis pathway. The protein is Aspartate carbamoyltransferase catalytic subunit of Pseudomonas syringae pv. tomato (strain ATCC BAA-871 / DC3000).